The following is a 407-amino-acid chain: Probable NADPH dehydrogenase (407 aa).

Residues Thr49 and Gln124 each coordinate FMN. Residue Tyr206 is the Proton donor of the active site. FMN contacts are provided by Arg254 and Arg357.

The protein belongs to the NADH:flavin oxidoreductase/NADH oxidase family. FMN is required as a cofactor.

The enzyme catalyses A + NADPH + H(+) = AH2 + NADP(+). Its function is as follows. Oxidoreductase that binds mammalian estrogens with high affinity. The sequence is that of Probable NADPH dehydrogenase from Candida albicans (strain SC5314 / ATCC MYA-2876) (Yeast).